We begin with the raw amino-acid sequence, 250 residues long: Ubiquinone/menaquinone biosynthesis C-methyltransferase UbiE (250 aa).

Residues threonine 73, aspartate 94, 122–123 (NA), and serine 139 contribute to the S-adenosyl-L-methionine site.

Belongs to the class I-like SAM-binding methyltransferase superfamily. MenG/UbiE family.

The enzyme catalyses a 2-demethylmenaquinol + S-adenosyl-L-methionine = a menaquinol + S-adenosyl-L-homocysteine + H(+). The catalysed reaction is a 2-methoxy-6-(all-trans-polyprenyl)benzene-1,4-diol + S-adenosyl-L-methionine = a 5-methoxy-2-methyl-3-(all-trans-polyprenyl)benzene-1,4-diol + S-adenosyl-L-homocysteine + H(+). The protein operates within quinol/quinone metabolism; menaquinone biosynthesis; menaquinol from 1,4-dihydroxy-2-naphthoate: step 2/2. It functions in the pathway cofactor biosynthesis; ubiquinone biosynthesis. Methyltransferase required for the conversion of demethylmenaquinol (DMKH2) to menaquinol (MKH2) and the conversion of 2-polyprenyl-6-methoxy-1,4-benzoquinol (DDMQH2) to 2-polyprenyl-3-methyl-6-methoxy-1,4-benzoquinol (DMQH2). This chain is Ubiquinone/menaquinone biosynthesis C-methyltransferase UbiE, found in Francisella tularensis subsp. mediasiatica (strain FSC147).